A 153-amino-acid chain; its full sequence is Prostaglandin E synthase (153 aa).

The Lumenal segment spans residues methionine 1 to valine 13. Residues leucine 14 to lysine 42 traverse the membrane as a helical segment. Arginine 39 contributes to the glutathione binding site. Residues lysine 43–arginine 61 lie on the Cytoplasmic side of the membrane. The chain crosses the membrane as a helical span at residues serine 62–serine 91. Arginine 74–glutamate 78 serves as a coordination point for glutathione. Topologically, residues phenylalanine 92–leucine 98 are lumenal. Residues isoleucine 99–glycine 120 traverse the membrane as a helical segment. Histidine 114 and tyrosine 118 together coordinate glutathione. The Cytoplasmic segment spans residues lysine 121–proline 124. Residues arginine 125–leucine 153 form a helical membrane-spanning segment. Glutathione is bound at residue arginine 127–tyrosine 131.

It belongs to the MAPEG family. The cofactor is glutathione.

It is found in the membrane. The protein resides in the cytoplasm. The protein localises to the perinuclear region. It catalyses the reaction prostaglandin H2 = prostaglandin E2. It carries out the reaction 2-glyceryl-prostaglandin H2 = 2-glyceryl-prostaglandin E2. The catalysed reaction is prostaglandin G2 = (15S)-15-hydroperoxy-prostaglandin E2. The enzyme catalyses 1-chloro-2,4-dinitrobenzene + glutathione = 2,4-dinitrophenyl-S-glutathione + chloride + H(+). It catalyses the reaction (5S)-hydroperoxy-(6E,8Z,11Z,14Z)-eicosatetraenoate + 2 glutathione = (5S)-hydroxy-(6E,8Z,11Z,14Z)-eicosatetraenoate + glutathione disulfide + H2O. It participates in lipid metabolism; prostaglandin biosynthesis. Its activity is regulated as follows. Activity is increased following LPS stimulation and down-regulated by the anti-inflammatory glucocorticoid dexamethasone. In terms of biological role, terminal enzyme of the cyclooxygenase (COX)-2-mediated prostaglandin E2 (PGE2) biosynthetic pathway. Catalyzes the glutathione-dependent oxidoreduction of prostaglandin endoperoxide H2 (PGH2) to prostaglandin E2 (PGE2) in response to inflammatory stimuli. Plays a key role in inflammation response, fever and pain. Also catalyzes the oxidoreduction of endocannabinoids into prostaglandin glycerol esters and PGG2 into 15-hydroperoxy-PGE2. In addition, displays low glutathione transferase and glutathione-dependent peroxidase activities, toward 1-chloro-2,4-dinitrobenzene and 5-hydroperoxyicosatetraenoic acid (5-HPETE), respectively. The protein is Prostaglandin E synthase (Ptges) of Rattus norvegicus (Rat).